The following is a 492-amino-acid chain: Probable malate:quinone oxidoreductase 1 (492 aa).

Belongs to the MQO family. The cofactor is FAD.

The catalysed reaction is (S)-malate + a quinone = a quinol + oxaloacetate. Its pathway is carbohydrate metabolism; tricarboxylic acid cycle; oxaloacetate from (S)-malate (quinone route): step 1/1. In Staphylococcus epidermidis (strain ATCC 35984 / DSM 28319 / BCRC 17069 / CCUG 31568 / BM 3577 / RP62A), this protein is Probable malate:quinone oxidoreductase 1.